The primary structure comprises 214 residues: Calcineurin B homologous protein 3 (214 aa).

Glycine 2 carries N-myristoyl glycine lipidation. One can recognise an EF-hand domain in the interval 110–145 (CRKDKLRFLFNMYDTDNDSKITLEEYRKVVEELLSG). Positions 123, 125, 127, 129, and 134 each coordinate Ca(2+).

Belongs to the calcineurin regulatory subunit family. CHP subfamily. In terms of assembly, monomer. Homodimer.

It is found in the nucleus. Its subcellular location is the cytoplasm. The protein localises to the membrane. The protein resides in the cell membrane. It localises to the cell projection. It is found in the lamellipodium. Its subcellular location is the ruffle membrane. Functions as an integral cofactor in cell pH regulation by controlling plasma membrane-type Na(+)/H(+) exchange activity. Promotes the induction of hematopoietic stem cell differentiation toward megakaryocytic lineage. Essential for the coupling of ERK cascade activation with the expression of ETS family genes in megakaryocytic differentiation. Also involved in granulocytic differentiation in a ERK-dependent manner. Inhibits the phosphatase activity of calcineurin. The chain is Calcineurin B homologous protein 3 (tesc) from Xenopus tropicalis (Western clawed frog).